We begin with the raw amino-acid sequence, 155 residues long: uncharacterized protein (155 aa).

2 disordered regions span residues Met1 to Phe22 and Asn110 to Ala155. Residue Ser2 is modified to N-acetylserine. 3 positions are modified to phosphoserine: Ser136, Ser144, and Ser146. The span at Ser136–Ala155 shows a compositional bias: acidic residues.

This is an uncharacterized protein from Mus musculus (Mouse).